Consider the following 224-residue polypeptide: Ribonuclease 3 (224 aa).

In terms of domain architecture, RNase III spans 4–126 (LDRLQRQISY…IIGAISLDSS (123 aa)). E39 lines the Mg(2+) pocket. D43 is a catalytic residue. Mg(2+)-binding residues include D112 and E115. E115 is an active-site residue. The region spanning 153–223 (DPKTRLQEYL…AEQILTALEI (71 aa)) is the DRBM domain.

It belongs to the ribonuclease III family. As to quaternary structure, homodimer. It depends on Mg(2+) as a cofactor.

It is found in the cytoplasm. The enzyme catalyses Endonucleolytic cleavage to 5'-phosphomonoester.. Functionally, digests double-stranded RNA. Involved in the processing of primary rRNA transcript to yield the immediate precursors to the large and small rRNAs (23S and 16S). Processes some mRNAs, and tRNAs when they are encoded in the rRNA operon. Processes pre-crRNA and tracrRNA of type II CRISPR loci if present in the organism. The chain is Ribonuclease 3 from Mannheimia succiniciproducens (strain KCTC 0769BP / MBEL55E).